A 285-amino-acid chain; its full sequence is Pantothenate synthetase (285 aa).

30–37 contributes to the ATP binding site; it reads MGFLHEGH. His37 functions as the Proton donor in the catalytic mechanism. A (R)-pantoate-binding site is contributed by Gln61. Beta-alanine is bound at residue Gln61. 147-150 contacts ATP; the sequence is GQKD. Gln153 serves as a coordination point for (R)-pantoate. ATP-binding positions include Val176 and 184–187; that span reads KSSR.

The protein belongs to the pantothenate synthetase family. In terms of assembly, homodimer.

It localises to the cytoplasm. It catalyses the reaction (R)-pantoate + beta-alanine + ATP = (R)-pantothenate + AMP + diphosphate + H(+). Its pathway is cofactor biosynthesis; (R)-pantothenate biosynthesis; (R)-pantothenate from (R)-pantoate and beta-alanine: step 1/1. Functionally, catalyzes the condensation of pantoate with beta-alanine in an ATP-dependent reaction via a pantoyl-adenylate intermediate. The polypeptide is Pantothenate synthetase (Listeria innocua serovar 6a (strain ATCC BAA-680 / CLIP 11262)).